Consider the following 184-residue polypeptide: Adenylate kinase (184 aa).

12–17 (GAGKGT) serves as a coordination point for ATP. The segment at 32–61 (STGELLRKEIDLDTDLGKQVKDIMNRGELV) is NMP. AMP-binding positions include threonine 33, arginine 38, 59–61 (ELV), 85–88 (GYPR), and glutamine 92. The LID stretch occupies residues 126–132 (IRGRKDD). Arginine 127 is a binding site for ATP. AMP contacts are provided by arginine 129 and arginine 140. Position 168 (glycine 168) interacts with ATP.

The protein belongs to the adenylate kinase family. In terms of assembly, monomer.

It localises to the cytoplasm. It catalyses the reaction AMP + ATP = 2 ADP. Its pathway is purine metabolism; AMP biosynthesis via salvage pathway; AMP from ADP: step 1/1. Its function is as follows. Catalyzes the reversible transfer of the terminal phosphate group between ATP and AMP. Plays an important role in cellular energy homeostasis and in adenine nucleotide metabolism. This chain is Adenylate kinase, found in Prochlorococcus marinus subsp. pastoris (strain CCMP1986 / NIES-2087 / MED4).